The following is a 1144-amino-acid chain: Alpha-mannosidase 2 (1144 aa).

The Cytoplasmic segment spans residues 1-5 (MKLSR). Residues 6 to 26 (QFTVFGSAIFCVVIFSLYLML) traverse the membrane as a helical; Signal-anchor for type II membrane protein segment. At 27–1144 (DRGHLDYPRN…EISTFRIQLR (1118 aa)) the chain is on the lumenal side. Residue asparagine 78 is glycosylated (N-linked (GlcNAc...) asparagine). 2 positions are modified to phosphoserine: serine 80 and serine 82. A glycan (N-linked (GlcNAc...) asparagine) is linked at asparagine 93. 4 residues coordinate Zn(2+): histidine 175, aspartate 177, aspartate 289, and histidine 569. The Nucleophile role is filled by aspartate 289. N-linked (GlcNAc...) asparagine glycosylation occurs at asparagine 1125.

The protein belongs to the glycosyl hydrolase 38 family. As to quaternary structure, homodimer; disulfide-linked. Requires Zn(2+) as cofactor. Post-translationally, glycosylated.

Its subcellular location is the golgi apparatus membrane. The enzyme catalyses N(4)-{beta-D-GlcNAc-(1-&gt;2)-alpha-D-Man-(1-&gt;3)-[alpha-D-Man-(1-&gt;3)-[alpha-D-Man-(1-&gt;6)]-alpha-D-Man-(1-&gt;6)]-beta-D-Man-(1-&gt;4)-beta-D-GlcNAc-(1-&gt;4)-beta-D-GlcNAc}-L-asparaginyl-[protein] + 2 H2O = 2 alpha-D-mannopyranose + an N(4)-{beta-D-GlcNAc-(1-&gt;2)-alpha-D-Man-(1-&gt;3)-[alpha-D-Man-(1-&gt;6)]-beta-D-Man-(1-&gt;4)-beta-D-GlcNAc-(1-&gt;4)-beta-D-GlcNAc}-L-asparaginyl-[protein]. The protein operates within protein modification; protein glycosylation. Functionally, catalyzes the first committed step in the biosynthesis of complex N-glycans. It controls conversion of high mannose to complex N-glycans; the final hydrolytic step in the N-glycan maturation pathway. This is Alpha-mannosidase 2 (MAN2A1) from Homo sapiens (Human).